Consider the following 214-residue polypeptide: Probable transaldolase (214 aa).

The Schiff-base intermediate with substrate role is filled by lysine 83.

Belongs to the transaldolase family. Type 3B subfamily.

It is found in the cytoplasm. The catalysed reaction is D-sedoheptulose 7-phosphate + D-glyceraldehyde 3-phosphate = D-erythrose 4-phosphate + beta-D-fructose 6-phosphate. Its pathway is carbohydrate degradation; pentose phosphate pathway; D-glyceraldehyde 3-phosphate and beta-D-fructose 6-phosphate from D-ribose 5-phosphate and D-xylulose 5-phosphate (non-oxidative stage): step 2/3. Functionally, transaldolase is important for the balance of metabolites in the pentose-phosphate pathway. The sequence is that of Probable transaldolase from Geobacter sp. (strain M21).